The sequence spans 796 residues: Histone acetyltransferase KAT2B (796 aa).

3 disordered regions span residues 1 to 32 (MSESTGIPQGSPAVGAAGSAPAAPGVGGTECS), 77 to 97 (WKSQNPPPTPPPPTPPRAEQP), and 371 to 408 (AGGGSVSPARKTASVLEPNPGGEKRKPAEPLSHEDSKR). Residues 10 to 24 (GSPAVGAAGSAPAAP) show a composition bias toward low complexity. A compositionally biased stretch (pro residues) spans 81 to 94 (NPPPTPPPPTPPRA). A compositionally biased stretch (basic and acidic residues) spans 392–408 (GEKRKPAEPLSHEDSKR). The 149-residue stretch at 469 to 617 (LNQKPNKKIL…GATLMGCELN (149 aa)) folds into the N-acetyltransferase domain. Catalysis depends on Glu-536, which acts as the Proton donor/acceptor. Acetyl-CoA-binding positions include 540–542 (CAV), 547–553 (QVKGYGT), and 578–581 (YAIG). The Bromo domain occupies 687–791 (KDPDQLYSTL…KFFYTKIKEA (105 aa)).

Belongs to the acetyltransferase family. GCN5 subfamily.

The protein resides in the nucleus. It localises to the cytoplasm. The protein localises to the cytoskeleton. It is found in the microtubule organizing center. Its subcellular location is the centrosome. The enzyme catalyses L-lysyl-[histone] + acetyl-CoA = N(6)-acetyl-L-lysyl-[histone] + CoA + H(+). The catalysed reaction is L-lysyl-[protein] + acetyl-CoA = N(6)-acetyl-L-lysyl-[protein] + CoA + H(+). It carries out the reaction spermidine + acetyl-CoA = N(8)-acetylspermidine + CoA + H(+). Functions as a histone acetyltransferase (HAT) to promote transcriptional activation. Has significant histone acetyltransferase activity with core histones (H3 and H4), and also with nucleosome core particles. Has a a strong preference for acetylation of H3 at 'Lys-9' (H3K9ac). Also acetylates non-histone proteins. Involved in heart and limb development by mediating acetylation of tbx5. Also acetylates spermidine. Together with kat2a, required for growth and differentiation of craniofacial cartilage and bone by regulating acetylation of histone H3 at 'Lys-9' (H3K9ac). The protein is Histone acetyltransferase KAT2B of Danio rerio (Zebrafish).